A 236-amino-acid chain; its full sequence is Auxin-responsive protein IAA13 (236 aa).

Disordered stretches follow at residues methionine 1–alanine 24, glutamate 52–valine 93, and serine 105–serine 130. The EAR-like (transcriptional repression) signature appears at leucine 12–leucine 16. Positions glutamate 52–proline 61 are enriched in low complexity. The segment covering alanine 62–proline 81 has biased composition (basic and acidic residues). Over residues glutamine 117–serine 130 the composition is skewed to low complexity. In terms of domain architecture, PB1 spans serine 131–glycine 218.

This sequence belongs to the Aux/IAA family. As to quaternary structure, homodimers and heterodimers.

The protein resides in the nucleus. Its function is as follows. Aux/IAA proteins are short-lived transcriptional factors that function as repressors of early auxin response genes at low auxin concentrations. The protein is Auxin-responsive protein IAA13 (IAA13) of Oryza sativa subsp. japonica (Rice).